The primary structure comprises 556 residues: Peptide chain release factor 3 (556 aa).

Residues 28–297 (QQRRNFAIIS…AFLDYALKPG (270 aa)) form the tr-type G domain. GTP contacts are provided by residues 37-44 (SHPDAGKT), 105-109 (DTPGH), and 159-162 (NKMD).

The protein belongs to the TRAFAC class translation factor GTPase superfamily. Classic translation factor GTPase family. PrfC subfamily.

The protein resides in the cytoplasm. Increases the formation of ribosomal termination complexes and stimulates activities of RF-1 and RF-2. It binds guanine nucleotides and has strong preference for UGA stop codons. It may interact directly with the ribosome. The stimulation of RF-1 and RF-2 is significantly reduced by GTP and GDP, but not by GMP. The chain is Peptide chain release factor 3 from Synechococcus sp. (strain ATCC 27144 / PCC 6301 / SAUG 1402/1) (Anacystis nidulans).